The chain runs to 264 residues: tRNA (guanine-N(1)-)-methyltransferase (264 aa).

S-adenosyl-L-methionine contacts are provided by residues Gly-125 and 145–150 (LGDFVL).

This sequence belongs to the RNA methyltransferase TrmD family. In terms of assembly, homodimer.

It is found in the cytoplasm. The enzyme catalyses guanosine(37) in tRNA + S-adenosyl-L-methionine = N(1)-methylguanosine(37) in tRNA + S-adenosyl-L-homocysteine + H(+). Its function is as follows. Specifically methylates guanosine-37 in various tRNAs. This is tRNA (guanine-N(1)-)-methyltransferase from Burkholderia cenocepacia (strain HI2424).